The sequence spans 116 residues: Large ribosomal subunit protein bL17 (116 aa).

This sequence belongs to the bacterial ribosomal protein bL17 family. In terms of assembly, part of the 50S ribosomal subunit. Contacts protein L32.

This Synechococcus sp. (strain CC9311) protein is Large ribosomal subunit protein bL17.